We begin with the raw amino-acid sequence, 460 residues long: 3-ketoacyl-CoA synthase 7 (460 aa).

A helical membrane pass occupies residues 21 to 41 (FHQFLVASACVLIAVFGYYFF). The FAE domain maps to 38-328 (YYFFKPRCII…YIISFIQRKW (291 aa)). Active-site residues include C183, H262, H345, H349, and N382.

Belongs to the thiolase-like superfamily. Chalcone/stilbene synthases family. Expressed in flowers.

The protein localises to the membrane. It carries out the reaction a very-long-chain acyl-CoA + malonyl-CoA + H(+) = a very-long-chain 3-oxoacyl-CoA + CO2 + CoA. The protein operates within lipid metabolism; fatty acid biosynthesis. The sequence is that of 3-ketoacyl-CoA synthase 7 from Arabidopsis thaliana (Mouse-ear cress).